The sequence spans 485 residues: ATP-dependent rRNA helicase RRP3 (485 aa).

Over residues Met-1–Ala-10 the composition is skewed to basic residues. Positions Met-1–Glu-55 are disordered. Over residues Ser-20 to Gln-32 the composition is skewed to low complexity. The short motif at Lys-59–Ala-87 is the Q motif element. Positions Ile-90–Val-261 constitute a Helicase ATP-binding domain. Position 103–110 (Ala-103–Thr-110) interacts with ATP. A DEAD box motif is present at residues Asp-209 to Asp-212. Positions Tyr-285–Met-433 constitute a Helicase C-terminal domain. Residues Glu-449–Gly-458 show a composition bias toward basic and acidic residues. Residues Glu-449–Gly-485 are disordered. A compositionally biased stretch (basic residues) spans Lys-465–Lys-474. The span at Arg-475 to Gly-485 shows a compositional bias: basic and acidic residues.

It belongs to the DEAD box helicase family. DDX47/RRP3 subfamily. As to quaternary structure, interacts with the SSU processome.

The protein localises to the nucleus. It catalyses the reaction ATP + H2O = ADP + phosphate + H(+). Its function is as follows. ATP-dependent rRNA helicase required for pre-ribosomal RNA processing. Involved in the maturation of the 35S-pre-rRNA and to its cleavage to mature 18S rRNA. The chain is ATP-dependent rRNA helicase RRP3 from Ajellomyces capsulatus (strain NAm1 / WU24) (Darling's disease fungus).